Reading from the N-terminus, the 375-residue chain is MQCALYDAGRCRSCQWITQPIPEQLSAKTADLKNLLADFPVEEWCAPVSGPEQGFRNKAKMVVSGSVEKTLLGMLHRDGTPEDLCDCPLYPASFAPVFAALKPFIARAGLTPYNVARKRGELKYILLTESQSDGGMMLRFVLRSDTKLAQLRKALPWLHEQLPQLKVITVNIQPVHMAIMEGETEIYLTEQQALAERFNDVPLWIRPQSFFQTNPAVASQLYATARDWVRQLPVKHMWDLFCGVGGFGLHCATPDMQLTGIEIAPEAIACAKQSAAELGLTRLQFQALDSTQFATAQGEVPELVLVNPPRRGIGKPLCDYLSTMAPRFIIYSSCNAQTMAKDIRELPGYRIERVQLFDMFPHTAHYEVLTLLVKQ.

[4Fe-4S] cluster is bound by residues Cys-3, Cys-11, Cys-14, and Cys-87. Positions 212, 241, 262, and 307 each coordinate S-adenosyl-L-methionine. Cys-334 acts as the Nucleophile in catalysis.

It belongs to the class I-like SAM-binding methyltransferase superfamily. RNA M5U methyltransferase family. RlmC subfamily.

The catalysed reaction is uridine(747) in 23S rRNA + S-adenosyl-L-methionine = 5-methyluridine(747) in 23S rRNA + S-adenosyl-L-homocysteine + H(+). Its function is as follows. Catalyzes the formation of 5-methyl-uridine at position 747 (m5U747) in 23S rRNA. The polypeptide is 23S rRNA (uracil(747)-C(5))-methyltransferase RlmC (Shigella flexneri serotype 5b (strain 8401)).